A 427-amino-acid polypeptide reads, in one-letter code: Serine--tRNA ligase (427 aa).

An L-serine-binding site is contributed by 231 to 233 (TAE). 262–264 (RSE) is an ATP binding site. E285 lines the L-serine pocket. Position 349-352 (349-352 (EISS)) interacts with ATP. S385 lines the L-serine pocket.

Belongs to the class-II aminoacyl-tRNA synthetase family. Type-1 seryl-tRNA synthetase subfamily. In terms of assembly, homodimer. The tRNA molecule binds across the dimer.

It is found in the cytoplasm. It carries out the reaction tRNA(Ser) + L-serine + ATP = L-seryl-tRNA(Ser) + AMP + diphosphate + H(+). The enzyme catalyses tRNA(Sec) + L-serine + ATP = L-seryl-tRNA(Sec) + AMP + diphosphate + H(+). It functions in the pathway aminoacyl-tRNA biosynthesis; selenocysteinyl-tRNA(Sec) biosynthesis; L-seryl-tRNA(Sec) from L-serine and tRNA(Sec): step 1/1. Catalyzes the attachment of serine to tRNA(Ser). Is also able to aminoacylate tRNA(Sec) with serine, to form the misacylated tRNA L-seryl-tRNA(Sec), which will be further converted into selenocysteinyl-tRNA(Sec). The chain is Serine--tRNA ligase from Rhizobium leguminosarum bv. trifolii (strain WSM2304).